Here is a 570-residue protein sequence, read N- to C-terminus: Periplasmic trehalase (570 aa).

The N-terminal stretch at 1–34 is a signal peptide; sequence MIPPEIRRSVLLQKAIKLALAGTLLTFASFSATA. Residues arginine 159, 166–167, asparagine 203, 212–214, 284–286, and glycine 317 each bind substrate; these read WD, HSQ, and RPE. Active-site proton donor/acceptor residues include aspartate 319 and glutamate 503. A substrate-binding site is contributed by glutamate 518. Positions 544–570 are disordered; that stretch reads KPCDSVPSTRPASLSATPTKTPSAATQ. The span at 554–570 shows a compositional bias: low complexity; that stretch reads PASLSATPTKTPSAATQ.

Belongs to the glycosyl hydrolase 37 family. As to quaternary structure, monomer.

The protein localises to the periplasm. The enzyme catalyses alpha,alpha-trehalose + H2O = alpha-D-glucose + beta-D-glucose. Its function is as follows. Provides the cells with the ability to utilize trehalose at high osmolarity by splitting it into glucose molecules that can subsequently be taken up by the phosphotransferase-mediated uptake system. This is Periplasmic trehalase from Salmonella paratyphi C (strain RKS4594).